Reading from the N-terminus, the 395-residue chain is LIM/homeobox protein Lhx3 (395 aa).

2 LIM zinc-binding domains span residues C28–D78 and C87–D141. Residues A154–K213 constitute a DNA-binding region (homeobox). Disordered regions lie at residues K208 to Y304 and G363 to P383. Residues D257–S278 are compositionally biased toward polar residues.

Interacts with ldb1 and with the N-terminus of rnf12. In terms of tissue distribution, in dorsal regions at neural tube and tailbud stages and in adults predominantly in the pituitary gland and weakly in the eye and brain.

It localises to the nucleus. In terms of biological role, transcription factor. May be involved in the specification and maintenance of differentiation of distinct neuronal and neuroendocrine tissues. Early marker for the pituitary and pineal lineages, it may be involved in specifying these lineages. This is LIM/homeobox protein Lhx3 (lhx3) from Xenopus laevis (African clawed frog).